A 490-amino-acid chain; its full sequence is MIPVVALVGRPNVGKSTLFNRLTRTRDALVADFPGLTRDRKYGRAHLAGYEFIVVDTGGIDGTEEGIETRMAEQSLAAIEEADVVLFMTDARAGLTAADLAIAQHLRSREKTTFVVANKVDGIDADSACAEFWSLGLGEVYQMAAAQGRGVTNMIEYSLAPYAEAMGITKDGEGEESEEEREYTEEEAEAEQKRLQDLPIKLAIIGKPNVGKSTLTNRILGEERVVVYDEPGTTRDSIYIPMEREGREYVLIDTAGVRRRSKVHETVEKFSVIKTLKAVEDCNVVLLIIDAREGIAEQDLGLLGFALNAGRALVIAVNKWDGIDQEVKDRVKSELDRRLGFIDFARIHFISALHGTGVGHLYESIEEAYDSATRRVSTSMLTRIMQMAQDDHQPPLVNGRRVKLKYAHAGGYNPPIVVVHGNQVKKLPDSYKRFMMNYYRRSLKVIGTPIQIRFQDGGNPFEGMNTKKLTVSQERRRKRMVGHIRDKNKD.

2 consecutive EngA-type G domains span residues 3–166 (PVVA…AEAM) and 200–373 (IKLA…DSAT). GTP is bound by residues 9–16 (GRPNVGKS), 56–60 (DTGGI), 118–121 (NKVD), 206–213 (GKPNVGKS), 253–257 (DTAGV), and 318–321 (NKWD). Residues 374 to 458 (RRVSTSMLTR…PIQIRFQDGG (85 aa)) enclose the KH-like domain.

Belongs to the TRAFAC class TrmE-Era-EngA-EngB-Septin-like GTPase superfamily. EngA (Der) GTPase family. As to quaternary structure, associates with the 50S ribosomal subunit.

GTPase that plays an essential role in the late steps of ribosome biogenesis. The polypeptide is GTPase Der (Shewanella piezotolerans (strain WP3 / JCM 13877)).